A 184-amino-acid chain; its full sequence is Peptidyl-tRNA hydrolase (184 aa).

Tyrosine 14 lines the tRNA pocket. Histidine 19 functions as the Proton acceptor in the catalytic mechanism. 3 residues coordinate tRNA: phenylalanine 64, asparagine 66, and asparagine 112.

It belongs to the PTH family. In terms of assembly, monomer.

The protein localises to the cytoplasm. It catalyses the reaction an N-acyl-L-alpha-aminoacyl-tRNA + H2O = an N-acyl-L-amino acid + a tRNA + H(+). Hydrolyzes ribosome-free peptidyl-tRNAs (with 1 or more amino acids incorporated), which drop off the ribosome during protein synthesis, or as a result of ribosome stalling. Its function is as follows. Catalyzes the release of premature peptidyl moieties from peptidyl-tRNA molecules trapped in stalled 50S ribosomal subunits, and thus maintains levels of free tRNAs and 50S ribosomes. The chain is Peptidyl-tRNA hydrolase from Thermoanaerobacter sp. (strain X514).